The following is an 83-amino-acid chain: Cell division topological specificity factor (83 aa).

Belongs to the MinE family.

Functionally, prevents the cell division inhibition by proteins MinC and MinD at internal division sites while permitting inhibition at polar sites. This ensures cell division at the proper site by restricting the formation of a division septum at the midpoint of the long axis of the cell. This chain is Cell division topological specificity factor, found in Marinobacter nauticus (strain ATCC 700491 / DSM 11845 / VT8) (Marinobacter aquaeolei).